The chain runs to 355 residues: uncharacterized protein (355 aa).

An N-terminal signal peptide occupies residues 1–22; the sequence is MRLTHVTACICLLVAVAVLFSG.

The protein belongs to the bacterial solute-binding protein 1 family. WtpA subfamily.

This is an uncharacterized protein from Methanoculleus marisnigri (strain ATCC 35101 / DSM 1498 / JR1).